The following is a 926-amino-acid chain: Protein O-mannosyl-transferase Tmtc3 (926 aa).

The segment at 1-26 is disordered; sequence MSTNPNPGIHQYAPSTLPREREREGA. The Cytoplasmic portion of the chain corresponds to 1–36; the sequence is MSTNPNPGIHQYAPSTLPREREREGATNSPQRNLLE. A helical membrane pass occupies residues 37–57; that stretch reads FLCICVACIVCYYNSTQCGLV. Residues 58-114 are Extracellular-facing; sequence FDDISAIRDNKDLRPHTPLINVFLNDFWGTPMRKEQSHKSYRPLTVLTFRFNYLLHA. The chain crosses the membrane as a helical span at residues 115 to 135; that stretch reads LEPFGYHLVNLLLHLSVCLLW. Residues 136–169 lie on the Cytoplasmic side of the membrane; that stretch reads RRVCRLLLRQCAASGSNAISAPSSSSVSQLNTCA. Residues 170–190 traverse the membrane as a helical segment; it reads FVASLLFAVHPVHTEAVTGVV. The Extracellular portion of the chain corresponds to 191 to 192; sequence GR. Residues 193–213 form a helical membrane-spanning segment; it reads AELLSSICFLAAFLSYAKSVG. Residues 214-222 are Cytoplasmic-facing; sequence DSGCPRRTN. A run of 2 helical transmembrane segments spans residues 223–239 and 240–259; these read WLTL…ASML and CKEQ…LFVV. The Cytoplasmic portion of the chain corresponds to 260–303; the sequence is HQLRPLHLCHFVLRLFDERTEQQSPKLANPSGIRRWSSSTLWKR. Residues 304–324 form a helical membrane-spanning segment; sequence LSFLVGITLTLLVGRVYVMGS. Over 325-345 the chain is Extracellular; it reads QLPIFTRFDNPASAADTPERQ. Residues 346–366 traverse the membrane as a helical segment; sequence LTYGYLIYLNCWLLLCPSLLC. Topologically, residues 367-384 are cytoplasmic; sequence CDWTMGTVPLLQGFTDSR. The chain crosses the membrane as a helical span at residues 385–405; it reads NITTLLTFLALGAMVAKTCFT. Topologically, residues 406 to 419 are extracellular; the sequence is RNLALSRTLIMCLG. A helical membrane pass occupies residues 420 to 440; the sequence is WMVLPFLPASNLFFPVGFVVA. The Cytoplasmic portion of the chain corresponds to 441 to 442; sequence ER. Residues 443–463 form a helical membrane-spanning segment; it reads ILYMPSMGYCLLVAYGFEQLQ. Topologically, residues 464–926 are extracellular; that stretch reads RRGSLSWQRF…RPTHKSRKRS (463 aa). TPR repeat units follow at residues 514–547, 548–581, 596–630, 631–664, 665–698, 736–769, 770–803, 805–838, and 839–872; these read AKLY…QTDD, IGAH…FPQA, LNVF…RSDY, VQAY…DNEN, ADIY…YPEH, EKVY…KADF, RSAL…HPSH, KGLI…DPHN, and TQGL…APAE. Residues N609 and N645 are each glycosylated (N-linked (GlcNAc...) asparagine).

Belongs to the TMTC family.

The protein localises to the membrane. The protein resides in the endoplasmic reticulum. It catalyses the reaction a di-trans,poly-cis-dolichyl beta-D-mannosyl phosphate + L-seryl-[protein] = 3-O-(alpha-D-mannosyl)-L-seryl-[protein] + a di-trans,poly-cis-dolichyl phosphate + H(+). The enzyme catalyses a di-trans,poly-cis-dolichyl beta-D-mannosyl phosphate + L-threonyl-[protein] = 3-O-(alpha-D-mannosyl)-L-threonyl-[protein] + a di-trans,poly-cis-dolichyl phosphate + H(+). It functions in the pathway protein modification; protein glycosylation. Functionally, transfers mannosyl residues to the hydroxyl group of serine or threonine residues. The chain is Protein O-mannosyl-transferase Tmtc3 from Drosophila melanogaster (Fruit fly).